The primary structure comprises 142 residues: Large ribosomal subunit protein uL13 (142 aa).

The protein belongs to the universal ribosomal protein uL13 family. In terms of assembly, part of the 50S ribosomal subunit.

In terms of biological role, this protein is one of the early assembly proteins of the 50S ribosomal subunit, although it is not seen to bind rRNA by itself. It is important during the early stages of 50S assembly. The polypeptide is Large ribosomal subunit protein uL13 (Coxiella burnetii (strain CbuG_Q212) (Coxiella burnetii (strain Q212))).